A 334-amino-acid polypeptide reads, in one-letter code: Protein RecA (334 aa).

G65–T72 contacts ATP.

The protein belongs to the RecA family.

The protein localises to the cytoplasm. Its function is as follows. Can catalyze the hydrolysis of ATP in the presence of single-stranded DNA, the ATP-dependent uptake of single-stranded DNA by duplex DNA, and the ATP-dependent hybridization of homologous single-stranded DNAs. It interacts with LexA causing its activation and leading to its autocatalytic cleavage. The protein is Protein RecA of Ureaplasma parvum serovar 3 (strain ATCC 27815 / 27 / NCTC 11736).